The chain runs to 482 residues: MELRLYDTLTKEKRAFIPIDPSNVRMYVCGPTVYDFAHIGNARPVIVFDVLFRLLQHIYGTDHVTYVRNITDVDDKINDRAARDFPGLPLNEAIRKVTEKTAEQFQADVAALGCLPPTHQPRATEFVLPRDDGRADMVTLIKQLIARGHAYEAGGEVLFDVQSMPDYGALSGRRLEEQKAGARVAVDAHKRNPADFVLWKLSSENEPGWDSPWGRGRPGWHIECSAMSAAYLGDVFDIHGGGLDLIFPHHENEIAQSRCAHGTHTMANYWMHNGFLQVEGEKMSKSLGNFFTINELLTTEKFGGRKWPGEVLRLAMLKTHYRSPIDWTVDALEESKRILDSWYDIVGDDTEAIGEVDREVSAFLGDDLNTSAAVTRLHAIAASRIGKSGQLQIDAKRKLKVSAVMLGLLGRTKREYLETDPQVILVDSNLVAHLLSDRAAARARKDFKESDRIRDELAAMGVVLKDGKDADGKPETTWEIAR.

Cys29 contributes to the Zn(2+) binding site. The short motif at 31–41 (PTVYDFAHIGN) is the 'HIGH' region element. The Zn(2+) site is built by Cys224, His249, and Glu253. Positions 282-286 (KMSKS) match the 'KMSKS' region motif. Residue Lys285 coordinates ATP.

It belongs to the class-I aminoacyl-tRNA synthetase family. Monomer. Zn(2+) is required as a cofactor.

The protein resides in the cytoplasm. It catalyses the reaction tRNA(Cys) + L-cysteine + ATP = L-cysteinyl-tRNA(Cys) + AMP + diphosphate. This is Cysteine--tRNA ligase from Nitrobacter hamburgensis (strain DSM 10229 / NCIMB 13809 / X14).